The chain runs to 543 residues: Chaperonin GroEL (543 aa).

Residues 29-32 (TLGP), 86-90 (DGTTT), Gly413, 477-479 (DAL), and Asp493 contribute to the ATP site.

Belongs to the chaperonin (HSP60) family. Forms a cylinder of 14 subunits composed of two heptameric rings stacked back-to-back. Interacts with the co-chaperonin GroES.

It localises to the cytoplasm. The catalysed reaction is ATP + H2O + a folded polypeptide = ADP + phosphate + an unfolded polypeptide.. Functionally, together with its co-chaperonin GroES, plays an essential role in assisting protein folding. The GroEL-GroES system forms a nano-cage that allows encapsulation of the non-native substrate proteins and provides a physical environment optimized to promote and accelerate protein folding. The polypeptide is Chaperonin GroEL (Clostridium botulinum).